Reading from the N-terminus, the 239-residue chain is Geranylgeranylglyceryl phosphate synthase (239 aa).

Mg(2+)-binding residues include D18 and S45. Sn-glycerol 1-phosphate is bound by residues 166–172 (YLEAGSG), 197–198 (GG), and 219–220 (GT).

Belongs to the GGGP/HepGP synthase family. Group II subfamily. Mg(2+) is required as a cofactor.

It is found in the cytoplasm. It catalyses the reaction sn-glycerol 1-phosphate + (2E,6E,10E)-geranylgeranyl diphosphate = sn-3-O-(geranylgeranyl)glycerol 1-phosphate + diphosphate. Its pathway is membrane lipid metabolism; glycerophospholipid metabolism. Prenyltransferase that catalyzes the transfer of the geranylgeranyl moiety of geranylgeranyl diphosphate (GGPP) to the C3 hydroxyl of sn-glycerol-1-phosphate (G1P). This reaction is the first ether-bond-formation step in the biosynthesis of archaeal membrane lipids. This is Geranylgeranylglyceryl phosphate synthase from Pyrobaculum islandicum (strain DSM 4184 / JCM 9189 / GEO3).